Consider the following 25-residue polypeptide: Arginine attenuator peptide (25 aa).

This sequence belongs to the arginine attenuator peptide family.

Arginine attenuator peptide (AAP) that has a regulatory role in the production of arginine-specific carbamoyl phosphate synthetase. Encoded by an upstream open reading frame (uORF) within the 5'-leader region of arginine-specific carbamoyl phosphate synthetase small chain (CPA1) mRNA, it attenuates the translation of the downstream CPA1 ORF. In the presence of high concentrations of arginine, ribosomes translating the uORF encoding AAP stall at the termination codon, resulting in reduced translation from the downstream CPA1 initiation codon. In Saccharomyces cerevisiae (strain ATCC 204508 / S288c) (Baker's yeast), this protein is Arginine attenuator peptide.